The chain runs to 347 residues: GMP reductase (347 aa).

Residue 108–131 (ADFEKTKQILDLNSALNFVCIDVA) coordinates NADP(+). Positions 181 and 183 each coordinate K(+). Cys-186 serves as the catalytic Thioimidate intermediate. 216–239 (IVSDGGCTTPGDVAKAFGGGADFV) lines the NADP(+) pocket.

Belongs to the IMPDH/GMPR family. GuaC type 1 subfamily. Homotetramer.

It carries out the reaction IMP + NH4(+) + NADP(+) = GMP + NADPH + 2 H(+). Functionally, catalyzes the irreversible NADPH-dependent deamination of GMP to IMP. It functions in the conversion of nucleobase, nucleoside and nucleotide derivatives of G to A nucleotides, and in maintaining the intracellular balance of A and G nucleotides. This is GMP reductase from Escherichia coli O81 (strain ED1a).